The primary structure comprises 362 residues: 5-amino-6-(D-ribitylamino)uracil--L-tyrosine 4-hydroxyphenyl transferase (362 aa).

Residues 48–294 (ITYVVNRNIN…GDTIKNIQVS (247 aa)) enclose the Radical SAM core domain. Residues C62, C66, and C69 each coordinate [4Fe-4S] cluster.

Belongs to the radical SAM superfamily. CofH family. Consists of two subunits, CofG and CofH. Requires [4Fe-4S] cluster as cofactor.

It carries out the reaction 5-amino-6-(D-ribitylamino)uracil + L-tyrosine + S-adenosyl-L-methionine = 5-amino-5-(4-hydroxybenzyl)-6-(D-ribitylimino)-5,6-dihydrouracil + 2-iminoacetate + 5'-deoxyadenosine + L-methionine + H(+). It functions in the pathway cofactor biosynthesis; coenzyme F0 biosynthesis. Functionally, catalyzes the radical-mediated synthesis of 5-amino-5-(4-hydroxybenzyl)-6-(D-ribitylimino)-5,6-dihydrouracil from 5-amino-6-(D-ribitylamino)uracil and L-tyrosine. This chain is 5-amino-6-(D-ribitylamino)uracil--L-tyrosine 4-hydroxyphenyl transferase, found in Methanococcus aeolicus (strain ATCC BAA-1280 / DSM 17508 / OCM 812 / Nankai-3).